Consider the following 504-residue polypeptide: ATP synthase subunit alpha 1 (504 aa).

172 to 179 (GDRQTGKT) contributes to the ATP binding site.

The protein belongs to the ATPase alpha/beta chains family. F-type ATPases have 2 components, CF(1) - the catalytic core - and CF(0) - the membrane proton channel. CF(1) has five subunits: alpha(3), beta(3), gamma(1), delta(1), epsilon(1). CF(0) has three main subunits: a(1), b(2) and c(9-12). The alpha and beta chains form an alternating ring which encloses part of the gamma chain. CF(1) is attached to CF(0) by a central stalk formed by the gamma and epsilon chains, while a peripheral stalk is formed by the delta and b chains.

Its subcellular location is the cell inner membrane. The enzyme catalyses ATP + H2O + 4 H(+)(in) = ADP + phosphate + 5 H(+)(out). In terms of biological role, produces ATP from ADP in the presence of a proton gradient across the membrane. The alpha chain is a regulatory subunit. The polypeptide is ATP synthase subunit alpha 1 (Rhodopirellula baltica (strain DSM 10527 / NCIMB 13988 / SH1)).